The primary structure comprises 801 residues: Mitochondrial intermediate peptidase (801 aa).

The transit peptide at 1-41 (MKDQLLVPLRRRPWTCQKCLQRLQLPRHQTRRSFETAASPF) directs the protein to the mitochondrion. A Zn(2+)-binding site is contributed by H564. E565 is an active-site residue. Residues H568 and H571 each contribute to the Zn(2+) site.

This sequence belongs to the peptidase M3 family. The cofactor is Zn(2+).

It is found in the mitochondrion matrix. The catalysed reaction is Release of an N-terminal octapeptide as second stage of processing of some proteins imported into the mitochondrion.. In terms of biological role, cleaves proteins, imported into the mitochondrion, to their mature size. While most mitochondrial precursor proteins are processed to the mature form in one step by mitochondrial processing peptidase (MPP), the sequential cleavage by MIP of an octapeptide after initial processing by MPP is a required step for a subgroup of nuclear-encoded precursor proteins destined for the matrix or the inner membrane. The chain is Mitochondrial intermediate peptidase (oct1) from Aspergillus fumigatus (strain ATCC MYA-4609 / CBS 101355 / FGSC A1100 / Af293) (Neosartorya fumigata).